We begin with the raw amino-acid sequence, 216 residues long: Small ribosomal subunit protein uS3 (216 aa).

The 73-residue stretch at 39–111 folds into the KH type-2 domain; that stretch reads IYKFFDKLVR…DINLQVSLLK (73 aa).

This sequence belongs to the universal ribosomal protein uS3 family. Part of the 30S ribosomal subunit. Forms a tight complex with proteins S10 and S14.

In terms of biological role, binds the lower part of the 30S subunit head. Binds mRNA in the 70S ribosome, positioning it for translation. This is Small ribosomal subunit protein uS3 from Mycoplasmopsis agalactiae (strain NCTC 10123 / CIP 59.7 / PG2) (Mycoplasma agalactiae).